The sequence spans 492 residues: Catalase (492 aa).

Residues His-65 and Asn-138 contribute to the active site. A heme-binding site is contributed by Tyr-348.

It belongs to the catalase family. In terms of assembly, homotetramer. Heme serves as cofactor.

The protein resides in the cytoplasm. The protein localises to the cytosol. Its subcellular location is the peroxisome matrix. The enzyme catalyses 2 H2O2 = O2 + 2 H2O. In terms of biological role, catalyzes the degradation of hydrogen peroxide (H(2)O(2)) generated by peroxisomal oxidases to water and oxygen, thereby protecting cells from the toxic effects of hydrogen peroxide. In Helianthus annuus (Common sunflower), this protein is Catalase.